The chain runs to 440 residues: Ribosomal protein uS12 methylthiotransferase RimO (440 aa).

In terms of domain architecture, MTTase N-terminal spans 8 to 124 (TSVFLLSLGC…VLDALGARYH (117 aa)). [4Fe-4S] cluster-binding residues include cysteine 17, cysteine 53, cysteine 87, cysteine 148, cysteine 152, and cysteine 155. Positions 134–363 (LTPPHSSYLK…MELQEEIARK (230 aa)) constitute a Radical SAM core domain. In terms of domain architecture, TRAM spans 366 to 437 (EAFVGSLMTV…AYELHGTVES (72 aa)).

It belongs to the methylthiotransferase family. RimO subfamily. [4Fe-4S] cluster serves as cofactor.

Its subcellular location is the cytoplasm. It catalyses the reaction L-aspartate(89)-[ribosomal protein uS12]-hydrogen + (sulfur carrier)-SH + AH2 + 2 S-adenosyl-L-methionine = 3-methylsulfanyl-L-aspartate(89)-[ribosomal protein uS12]-hydrogen + (sulfur carrier)-H + 5'-deoxyadenosine + L-methionine + A + S-adenosyl-L-homocysteine + 2 H(+). In terms of biological role, catalyzes the methylthiolation of an aspartic acid residue of ribosomal protein uS12. In Chlorobium luteolum (strain DSM 273 / BCRC 81028 / 2530) (Pelodictyon luteolum), this protein is Ribosomal protein uS12 methylthiotransferase RimO.